Consider the following 447-residue polypeptide: Glutamyl-tRNA(Gln) amidotransferase subunit A (447 aa).

Active-site charge relay system residues include Lys-50 and Ser-125. Residue Ser-149 is the Acyl-ester intermediate of the active site.

Belongs to the amidase family. GatA subfamily. In terms of assembly, heterotrimer of A, B and C subunits.

The catalysed reaction is L-glutamyl-tRNA(Gln) + L-glutamine + ATP + H2O = L-glutaminyl-tRNA(Gln) + L-glutamate + ADP + phosphate + H(+). Allows the formation of correctly charged Gln-tRNA(Gln) through the transamidation of misacylated Glu-tRNA(Gln) in organisms which lack glutaminyl-tRNA synthetase. The reaction takes place in the presence of glutamine and ATP through an activated gamma-phospho-Glu-tRNA(Gln). This Sulfurimonas denitrificans (strain ATCC 33889 / DSM 1251) (Thiomicrospira denitrificans (strain ATCC 33889 / DSM 1251)) protein is Glutamyl-tRNA(Gln) amidotransferase subunit A.